Here is a 179-residue protein sequence, read N- to C-terminus: Exosome complex component Csl4 (179 aa).

The region spanning 58 to 137 (GDVVLGRVVD…RLSTKEEEMG (80 aa)) is the S1 motif domain. Zn(2+) contacts are provided by cysteine 143, cysteine 146, cysteine 159, and cysteine 162.

The protein belongs to the CSL4 family. As to quaternary structure, component of the archaeal exosome complex. Forms a trimer of Rrp4 and/or Csl4 subunits. The trimer associates with a hexameric ring-like arrangement composed of 3 Rrp41-Rrp42 heterodimers. Interacts with DnaG.

The protein localises to the cytoplasm. Non-catalytic component of the exosome, which is a complex involved in RNA degradation. Increases the RNA binding and the efficiency of RNA degradation. Helpful for the interaction of the exosome with A-poor RNAs. The chain is Exosome complex component Csl4 from Archaeoglobus fulgidus (strain ATCC 49558 / DSM 4304 / JCM 9628 / NBRC 100126 / VC-16).